A 1137-amino-acid polypeptide reads, in one-letter code: Phytochrome C (1137 aa).

Low complexity predominate over residues 1-18 (MSSSRSNNRATCSRSSSA). Residues 1–27 (MSSSRSNNRATCSRSSSARSKHSARVV) form a disordered region. The GAF domain maps to 217–400 (NLSLLCDVLV…VFGIQINKEV (184 aa)). Phytochromobilin is bound at residue Cys322. PAS domains follow at residues 620–690 (VTNE…LQGI) and 750–824 (IQGD…TKLS). One can recognise a Histidine kinase domain in the interval 904 to 1124 (YIRQELRNPL…IVLVEFPVAQ (221 aa)).

This sequence belongs to the phytochrome family. Homodimer. In terms of processing, contains one covalently linked phytochromobilin chromophore.

Regulatory photoreceptor which exists in two forms that are reversibly interconvertible by light: the Pr form that absorbs maximally in the red region of the spectrum and the Pfr form that absorbs maximally in the far-red region. Photoconversion of Pr to Pfr induces an array of morphogenic responses, whereas reconversion of Pfr to Pr cancels the induction of those responses. Pfr controls the expression of a number of nuclear genes including those encoding the small subunit of ribulose-bisphosphate carboxylase, chlorophyll A/B binding protein, protochlorophyllide reductase, rRNA, etc. It also controls the expression of its own gene(s) in a negative feedback fashion. This chain is Phytochrome C (PHYC), found in Oryza sativa subsp. japonica (Rice).